The following is a 292-amino-acid chain: Acetyl-coenzyme A carboxylase carboxyl transferase subunit beta (292 aa).

Residues 29-292 (LWSKCPECGQ…HGCLQGSAAV (264 aa)) form the CoA carboxyltransferase N-terminal domain. Residues C33, C36, C52, and C55 each contribute to the Zn(2+) site. The segment at 33-55 (CPECGQVVYRKDLLANASVCSNC) adopts a C4-type zinc-finger fold.

Belongs to the AccD/PCCB family. As to quaternary structure, acetyl-CoA carboxylase is a heterohexamer composed of biotin carboxyl carrier protein (AccB), biotin carboxylase (AccC) and two subunits each of ACCase subunit alpha (AccA) and ACCase subunit beta (AccD). The cofactor is Zn(2+).

The protein localises to the cytoplasm. The catalysed reaction is N(6)-carboxybiotinyl-L-lysyl-[protein] + acetyl-CoA = N(6)-biotinyl-L-lysyl-[protein] + malonyl-CoA. The protein operates within lipid metabolism; malonyl-CoA biosynthesis; malonyl-CoA from acetyl-CoA: step 1/1. Component of the acetyl coenzyme A carboxylase (ACC) complex. Biotin carboxylase (BC) catalyzes the carboxylation of biotin on its carrier protein (BCCP) and then the CO(2) group is transferred by the transcarboxylase to acetyl-CoA to form malonyl-CoA. This Synechococcus sp. (strain WH7803) protein is Acetyl-coenzyme A carboxylase carboxyl transferase subunit beta.